A 1072-amino-acid polypeptide reads, in one-letter code: Carbamoyl phosphate synthase large chain (1072 aa).

Positions 1–401 (MPKRLDINTI…SLLKAVRSLE (401 aa)) are carboxyphosphate synthetic domain. Arg-129, Arg-169, Gly-175, Gly-176, Lys-208, Ile-210, Glu-215, Gly-241, Val-242, His-243, Gln-284, and Glu-298 together coordinate ATP. The 195-residue stretch at 133-327 (RTLMQDLNEP…IAKLAAKIAV (195 aa)) folds into the ATP-grasp 1 domain. The Mg(2+) site is built by Gln-284, Glu-298, and Asn-300. 3 residues coordinate Mn(2+): Gln-284, Glu-298, and Asn-300. The tract at residues 402–546 (LGIYHLELDH…YSTYAEENES (145 aa)) is oligomerization domain. The segment at 547-929 (IVTDRKSVVV…ALYKGLVASG (383 aa)) is carbamoyl phosphate synthetic domain. One can recognise an ATP-grasp 2 domain in the interval 671–861 (EAALTKLGIP…MANVATKVIL (191 aa)). Residues Arg-707, Arg-746, Glu-752, Gly-777, Val-778, His-779, Ser-780, Gln-820, and Glu-832 each contribute to the ATP site. Residues Gln-820, Glu-832, and Asn-834 each coordinate Mg(2+). Mn(2+)-binding residues include Gln-820, Glu-832, and Asn-834. The MGS-like domain occupies 930–1072 (INIPTHGSVI…QTKRHEVVHA (143 aa)). The tract at residues 930-1072 (INIPTHGSVI…QTKRHEVVHA (143 aa)) is allosteric domain.

Belongs to the CarB family. Composed of two chains; the small (or glutamine) chain promotes the hydrolysis of glutamine to ammonia, which is used by the large (or ammonia) chain to synthesize carbamoyl phosphate. Tetramer of heterodimers (alpha,beta)4. The cofactor is Mg(2+). Mn(2+) serves as cofactor.

It catalyses the reaction hydrogencarbonate + L-glutamine + 2 ATP + H2O = carbamoyl phosphate + L-glutamate + 2 ADP + phosphate + 2 H(+). The catalysed reaction is hydrogencarbonate + NH4(+) + 2 ATP = carbamoyl phosphate + 2 ADP + phosphate + 2 H(+). Its pathway is amino-acid biosynthesis; L-arginine biosynthesis; carbamoyl phosphate from bicarbonate: step 1/1. The protein operates within pyrimidine metabolism; UMP biosynthesis via de novo pathway; (S)-dihydroorotate from bicarbonate: step 1/3. Large subunit of the glutamine-dependent carbamoyl phosphate synthetase (CPSase). CPSase catalyzes the formation of carbamoyl phosphate from the ammonia moiety of glutamine, carbonate, and phosphate donated by ATP, constituting the first step of 2 biosynthetic pathways, one leading to arginine and/or urea and the other to pyrimidine nucleotides. The large subunit (synthetase) binds the substrates ammonia (free or transferred from glutamine from the small subunit), hydrogencarbonate and ATP and carries out an ATP-coupled ligase reaction, activating hydrogencarbonate by forming carboxy phosphate which reacts with ammonia to form carbamoyl phosphate. This is Carbamoyl phosphate synthase large chain from Bacillus cereus (strain ATCC 10987 / NRS 248).